Reading from the N-terminus, the 480-residue chain is Protein nucleotidyltransferase YdiU (480 aa).

Glycine 86, glycine 88, arginine 89, lysine 109, aspartate 121, glycine 122, arginine 172, and arginine 179 together coordinate ATP. The active-site Proton acceptor is the aspartate 248. Residues asparagine 249 and aspartate 258 each coordinate Mg(2+). Aspartate 258 contributes to the ATP binding site.

The protein belongs to the SELO family. Requires Mg(2+) as cofactor. Mn(2+) is required as a cofactor.

The enzyme catalyses L-seryl-[protein] + ATP = 3-O-(5'-adenylyl)-L-seryl-[protein] + diphosphate. It carries out the reaction L-threonyl-[protein] + ATP = 3-O-(5'-adenylyl)-L-threonyl-[protein] + diphosphate. It catalyses the reaction L-tyrosyl-[protein] + ATP = O-(5'-adenylyl)-L-tyrosyl-[protein] + diphosphate. The catalysed reaction is L-histidyl-[protein] + UTP = N(tele)-(5'-uridylyl)-L-histidyl-[protein] + diphosphate. The enzyme catalyses L-seryl-[protein] + UTP = O-(5'-uridylyl)-L-seryl-[protein] + diphosphate. It carries out the reaction L-tyrosyl-[protein] + UTP = O-(5'-uridylyl)-L-tyrosyl-[protein] + diphosphate. Nucleotidyltransferase involved in the post-translational modification of proteins. It can catalyze the addition of adenosine monophosphate (AMP) or uridine monophosphate (UMP) to a protein, resulting in modifications known as AMPylation and UMPylation. This Salmonella paratyphi A (strain ATCC 9150 / SARB42) protein is Protein nucleotidyltransferase YdiU.